The chain runs to 442 residues: ATP-dependent protease ATPase subunit HslU (442 aa).

ATP is bound by residues I18 and 60 to 65 (GVGKTE). Residues 136 to 157 (LPKPKNDWESTETDSSSNTRQV) are disordered. Residues D255, E320, and R392 each coordinate ATP.

This sequence belongs to the ClpX chaperone family. HslU subfamily. As to quaternary structure, a double ring-shaped homohexamer of HslV is capped on each side by a ring-shaped HslU homohexamer. The assembly of the HslU/HslV complex is dependent on binding of ATP.

It localises to the cytoplasm. Its function is as follows. ATPase subunit of a proteasome-like degradation complex; this subunit has chaperone activity. The binding of ATP and its subsequent hydrolysis by HslU are essential for unfolding of protein substrates subsequently hydrolyzed by HslV. HslU recognizes the N-terminal part of its protein substrates and unfolds these before they are guided to HslV for hydrolysis. This chain is ATP-dependent protease ATPase subunit HslU, found in Shewanella baltica (strain OS185).